The chain runs to 427 residues: Adenylosuccinate synthetase (427 aa).

Residues 12 to 18 (GDEGKGK) and 40 to 42 (GHT) each bind GTP. Asp-13 acts as the Proton acceptor in catalysis. Residues Asp-13 and Gly-40 each contribute to the Mg(2+) site. IMP contacts are provided by residues 13–16 (DEGK), 38–41 (NAGH), Thr-128, Arg-142, Gln-223, Thr-238, and Arg-302. His-41 serves as the catalytic Proton donor. 298–304 (TTTGRPR) serves as a coordination point for substrate. GTP is bound by residues Arg-304, 330–332 (SID), and 412–414 (SVG).

It belongs to the adenylosuccinate synthetase family. As to quaternary structure, homodimer. It depends on Mg(2+) as a cofactor.

Its subcellular location is the cytoplasm. The enzyme catalyses IMP + L-aspartate + GTP = N(6)-(1,2-dicarboxyethyl)-AMP + GDP + phosphate + 2 H(+). It functions in the pathway purine metabolism; AMP biosynthesis via de novo pathway; AMP from IMP: step 1/2. Functionally, plays an important role in the de novo pathway of purine nucleotide biosynthesis. Catalyzes the first committed step in the biosynthesis of AMP from IMP. In Staphylococcus epidermidis (strain ATCC 35984 / DSM 28319 / BCRC 17069 / CCUG 31568 / BM 3577 / RP62A), this protein is Adenylosuccinate synthetase.